The primary structure comprises 495 residues: Putative myristoylated membrane protein 458R (495 aa).

Gly-2 is lipidated: N-myristoyl glycine; by host. Asn-58, Asn-71, Asn-72, Asn-103, and Asn-111 each carry an N-linked (GlcNAc...) asparagine; by host glycan. Residues 150-182 (HLKEIHKIITKEVENAKNNNKDVTKLIEQFSQA) are a coiled coil. 2 consecutive transmembrane segments (helical) span residues 194–214 (ILSLIIFSTAFLGLGGVYVGG) and 216–236 (IAFPVTLLLSILAFYQYFNWT). N-linked (GlcNAc...) asparagine; by host glycosylation is found at Asn-262, Asn-314, Asn-317, Asn-349, and Asn-457. A helical transmembrane segment spans residues 469–489 (LWLLCVAVILLFIGIIGMGLG).

Belongs to the IIV-6 118L/458R family.

It is found in the membrane. The polypeptide is Putative myristoylated membrane protein 458R (Acheta domesticus (House cricket)).